The sequence spans 106 residues: Aspartyl/glutamyl-tRNA(Asn/Gln) amidotransferase subunit C (106 aa).

It belongs to the GatC family. Heterotrimer of A, B and C subunits.

The catalysed reaction is L-glutamyl-tRNA(Gln) + L-glutamine + ATP + H2O = L-glutaminyl-tRNA(Gln) + L-glutamate + ADP + phosphate + H(+). It carries out the reaction L-aspartyl-tRNA(Asn) + L-glutamine + ATP + H2O = L-asparaginyl-tRNA(Asn) + L-glutamate + ADP + phosphate + 2 H(+). In terms of biological role, allows the formation of correctly charged Asn-tRNA(Asn) or Gln-tRNA(Gln) through the transamidation of misacylated Asp-tRNA(Asn) or Glu-tRNA(Gln) in organisms which lack either or both of asparaginyl-tRNA or glutaminyl-tRNA synthetases. The reaction takes place in the presence of glutamine and ATP through an activated phospho-Asp-tRNA(Asn) or phospho-Glu-tRNA(Gln). In Lactiplantibacillus plantarum (strain ATCC BAA-793 / NCIMB 8826 / WCFS1) (Lactobacillus plantarum), this protein is Aspartyl/glutamyl-tRNA(Asn/Gln) amidotransferase subunit C.